A 541-amino-acid polypeptide reads, in one-letter code: Zinc finger protein 513 (541 aa).

Residues M1–P118 are disordered. Over residues L44–G55 the composition is skewed to acidic residues. S85 and S96 each carry phosphoserine. A compositionally biased stretch (basic and acidic residues) spans E103–R115. 8 consecutive C2H2-type zinc fingers follow at residues Y150–H172, F178–H200, Y206–H228, F360–H382, F388–H410, Y416–H438, F444–H466, and F472–H494. Residues K492–P541 form a disordered region.

Belongs to the krueppel C2H2-type zinc-finger protein family. Binds DNA. Can associate with the proximal promoter regions of PAX6 and SP4, and their known targets including ARR3, RHO, OPN1MW2 and OPN1SW. Widely expressed. In the eye, expression is greatest in the retina and least in the lens and cornea.

The protein resides in the nucleus. In terms of biological role, transcriptional regulator that plays a role in retinal development and maintenance. This chain is Zinc finger protein 513 (Znf513), found in Mus musculus (Mouse).